A 488-amino-acid polypeptide reads, in one-letter code: 3-octaprenyl-4-hydroxybenzoate carboxy-lyase (488 aa).

Asparagine 172 serves as a coordination point for Mn(2+). Residues 175–177, 189–191, and 194–195 contribute to the prenylated FMN site; these read IYR, RWL, and RG. Glutamate 238 contributes to the Mn(2+) binding site. The active-site Proton donor is the aspartate 287.

It belongs to the UbiD family. As to quaternary structure, homohexamer. Requires prenylated FMN as cofactor. It depends on Mn(2+) as a cofactor.

The protein localises to the cell membrane. It carries out the reaction a 4-hydroxy-3-(all-trans-polyprenyl)benzoate + H(+) = a 2-(all-trans-polyprenyl)phenol + CO2. The protein operates within cofactor biosynthesis; ubiquinone biosynthesis. Its function is as follows. Catalyzes the decarboxylation of 3-octaprenyl-4-hydroxy benzoate to 2-octaprenylphenol, an intermediate step in ubiquinone biosynthesis. The protein is 3-octaprenyl-4-hydroxybenzoate carboxy-lyase of Alkalilimnicola ehrlichii (strain ATCC BAA-1101 / DSM 17681 / MLHE-1).